Consider the following 287-residue polypeptide: ATP synthase gamma chain (287 aa).

This sequence belongs to the ATPase gamma chain family. As to quaternary structure, F-type ATPases have 2 components, CF(1) - the catalytic core - and CF(0) - the membrane proton channel. CF(1) has five subunits: alpha(3), beta(3), gamma(1), delta(1), epsilon(1). CF(0) has three main subunits: a, b and c.

It localises to the cell inner membrane. In terms of biological role, produces ATP from ADP in the presence of a proton gradient across the membrane. The gamma chain is believed to be important in regulating ATPase activity and the flow of protons through the CF(0) complex. The protein is ATP synthase gamma chain of Sodalis glossinidius (strain morsitans).